The chain runs to 364 residues: Trans-enoyl reductase traG (364 aa).

Residue 51–54 (VDAK) participates in NADP(+) binding. 136-143 (LGLFTAGL) is a binding site for substrate. NADP(+) is bound by residues 176-179 (STAT), 199-202 (SKAN), Tyr217, and 264-265 (LE). 286-290 (ALTVF) lines the substrate pocket. 355–356 (MS) is an NADP(+) binding site.

The protein belongs to the zinc-containing alcohol dehydrogenase family. As to quaternary structure, monomer.

Its pathway is secondary metabolite biosynthesis. In terms of biological role, trans-enoyl reductase; part of the tra gene cluster that produces terrestric acid. The clavatol biosynthesis cluster cla and the terrestric acid cluster tra are both involved in the production of peniphenones and penilactones. The non-reducing PKS claF is responsible for the formation of clavatol from successive condensations of 3 malonyl-CoA units, presumably with a simple acetyl-CoA starter unit, and 2 methylation steps. The esterase claE probably collaborates with claF by catalyzing the hydrolysis of ACP-bound acyl intermediates to free the ACP from stalled intermediates. The clavatol oxidase claD then converts clavatol to hydroxyclavatol. Spontaneous dehydration of hydroxyclavatol leads to the accumulation of the highly active ortho-quinone methide. On the other hand, the PKS-NRPS hybrid traA is involved in the formation of crustosic acid, with the help of traB and traD. The polyketide synthase module (PKS) of traA is responsible for the synthesis of the polyketide backbone via the condensation of an acetyl-CoA starter unit with 3 malonyl-CoA units. The downstream nonribosomal peptide synthetase (NRPS) module then amidates the carboxyl end of the polyketide with L-malic acid. Because traA lacks a designated enoylreductase (ER) domain, the required activity is provided the enoyl reductase traG. Crustosic acid undergoes decarboxylation and isomerization to the terrestric acid, catalyzed by the 2-oxoglutarate-dependent dioxygenase traH. Both acids are further converted to the 2 gamma-butyrolactones (R)-5-methyltetronic acid and (S)-5-carboxylmethyltetronic acid, with involvement of the cytochrome P450 monooxygenase claJ. Spontaneous addition of the methide to these gamma-butyrolactones leads to peniphenone D and penilactone D, which undergo again stereospecific attacking by methide to give penilactones A and B. This is Trans-enoyl reductase traG from Penicillium crustosum (Blue mold fungus).